Consider the following 131-residue polypeptide: Glycine cleavage system H protein (131 aa).

The Lipoyl-binding domain maps to 24-106 (RVTVGISDHA…YGDGWMYVVE (83 aa)). K65 carries the post-translational modification N6-lipoyllysine.

It belongs to the GcvH family. The glycine cleavage system is composed of four proteins: P, T, L and H. (R)-lipoate serves as cofactor.

In terms of biological role, the glycine cleavage system catalyzes the degradation of glycine. The H protein shuttles the methylamine group of glycine from the P protein to the T protein. The sequence is that of Glycine cleavage system H protein from Stenotrophomonas maltophilia (strain R551-3).